The chain runs to 417 residues: NADH-quinone oxidoreductase subunit D (417 aa).

This sequence belongs to the complex I 49 kDa subunit family. In terms of assembly, NDH-1 is composed of 14 different subunits. Subunits NuoB, C, D, E, F, and G constitute the peripheral sector of the complex.

The protein localises to the cell inner membrane. The catalysed reaction is a quinone + NADH + 5 H(+)(in) = a quinol + NAD(+) + 4 H(+)(out). Its function is as follows. NDH-1 shuttles electrons from NADH, via FMN and iron-sulfur (Fe-S) centers, to quinones in the respiratory chain. The immediate electron acceptor for the enzyme in this species is believed to be ubiquinone. Couples the redox reaction to proton translocation (for every two electrons transferred, four hydrogen ions are translocated across the cytoplasmic membrane), and thus conserves the redox energy in a proton gradient. This Francisella philomiragia subsp. philomiragia (strain ATCC 25017 / CCUG 19701 / FSC 153 / O#319-036) protein is NADH-quinone oxidoreductase subunit D.